A 387-amino-acid chain; its full sequence is MACTIQKAEALDGAHLMQILWYDEEESLYPAVWLRDNCPCSDCYLDSAKARKLLVEALDVNIGIKGLIFDRKKVYITWPDEHYSEFQADWLKKRCFSKQARAKLQRELFFPECQYWGSELQLPTLDFEDVLRYDEHAYKWLSTLKKVGIVRLTGASDKPGEVSKLGKRMGFLYLTFYGHTWQVQDKIDANNVAYTTGKLSFHTDYPALHHPPGVQLLHCIKQTVTGGDSEIVDGFNVCQKLKKNNPQAFQILSSTFVDFTDIGVDYCDFSVQSKHKIIELDDKGQVVRINFNNATRDTIFDVPVERVQPFYAALKEFVDLMNSKESKFTFKMNPGDVITFDNWRLLHGRRSYEAGTEISRHLEGAYADWDVVMSRLRILRQRVENGN.

Cys-38, Cys-40, Cys-43, and His-82 together coordinate Zn(2+). Positions 202, 204, and 347 each coordinate Fe cation. Residue Ser-351 is modified to Phosphoserine.

Belongs to the gamma-BBH/TMLD family. Fe(2+) serves as cofactor. It depends on L-ascorbate as a cofactor. As to expression, highly expressed in kidney; moderately expressed in liver; very low expression in brain.

The protein localises to the cytoplasm. It catalyses the reaction 4-(trimethylamino)butanoate + 2-oxoglutarate + O2 = carnitine + succinate + CO2. It functions in the pathway amine and polyamine biosynthesis; carnitine biosynthesis. Its function is as follows. Catalyzes the formation of L-carnitine from gamma-butyrobetaine. The chain is Gamma-butyrobetaine dioxygenase (BBOX1) from Homo sapiens (Human).